Reading from the N-terminus, the 83-residue chain is Retinal cone rhodopsin-sensitive cGMP 3',5'-cyclic phosphodiesterase subunit gamma (83 aa).

Residues 1 to 51 (MSDSPCLSPPAPSQGPTTPRKGPPKFKQRQTRQFKSKPPKKGVKGFGDDIP) form a disordered region. Residues 22–43 (GPPKFKQRQTRQFKSKPPKKGV) are compositionally biased toward basic residues.

The protein belongs to the rod/cone cGMP-PDE gamma subunit family. As to quaternary structure, tetramer composed of two catalytic chains (alpha and beta), and two inhibitory chains (gamma).

It carries out the reaction 3',5'-cyclic GMP + H2O = GMP + H(+). In terms of biological role, participates in processes of transmission and amplification of the visual signal. cGMP-PDEs are the effector molecules in G-protein-mediated phototransduction in vertebrate rods and cones. The protein is Retinal cone rhodopsin-sensitive cGMP 3',5'-cyclic phosphodiesterase subunit gamma (Pde6h) of Rattus norvegicus (Rat).